A 391-amino-acid chain; its full sequence is E3 ubiquitin-protein ligase RMND5A (391 aa).

Met1 is modified (N-acetylmethionine). In terms of domain architecture, LisH spans 114–146; sequence SQRLLNEVMVEHFFRQGMLDVAEELCQESGLSV. A CTLH domain is found at 153–210; that stretch reads PFVELNRILEALKVRVLRPALEWAVSNREMLIAQNSSLEFKLHRLYFISLLMGGTTNQ. The segment at 336–377 adopts an RING-Gid-type zinc-finger fold; the sequence is CPILRQQTTDNNPPMKLVCGHIISRDALNKMFNGSKLKCPYC.

Identified in the CTLH complex that contains GID4, RANBP9 and/or RANBP10, MKLN1, MAEA, RMND5A (or alternatively its paralog RMND5B), GID8, ARMC8, WDR26 and YPEL5. Within this complex, MAEA, RMND5A (or alternatively its paralog RMND5B), GID8, WDR26, and RANBP9 and/or RANBP10 form the catalytic core, while GID4, MKLN1, ARMC8 and YPEL5 have ancillary roles.

It is found in the nucleus. It localises to the nucleoplasm. The protein localises to the cytoplasm. The catalysed reaction is S-ubiquitinyl-[E2 ubiquitin-conjugating enzyme]-L-cysteine + [acceptor protein]-L-lysine = [E2 ubiquitin-conjugating enzyme]-L-cysteine + N(6)-ubiquitinyl-[acceptor protein]-L-lysine.. Functionally, core component of the CTLH E3 ubiquitin-protein ligase complex that selectively accepts ubiquitin from UBE2H and mediates ubiquitination and subsequent proteasomal degradation of the transcription factor HBP1. MAEA and RMND5A are both required for catalytic activity of the CTLH E3 ubiquitin-protein ligase complex. Catalytic activity of the complex is required for normal cell proliferation. The CTLH E3 ubiquitin-protein ligase complex is not required for the degradation of enzymes involved in gluconeogenesis, such as FBP1. The chain is E3 ubiquitin-protein ligase RMND5A (Rmnd5a) from Mus musculus (Mouse).